Consider the following 717-residue polypeptide: Methionine--tRNA ligase (717 aa).

The 'HIGH' region motif lies at 19 to 29 (PYANGDLHVGH). 4 residues coordinate Zn(2+): cysteine 150, cysteine 153, cysteine 162, and cysteine 166. Positions 356 to 360 (ALSTS) match the 'KMSKS' region motif. Threonine 359 is an ATP binding site. Positions 573 to 603 (ERVEEASEASAEASNEGGEAAGDEVDDGDVD) are disordered. The span at 580 to 590 (EASAEASNEGG) shows a compositional bias: low complexity. The span at 593–603 (AGDEVDDGDVD) shows a compositional bias: acidic residues. In terms of domain architecture, tRNA-binding spans 619-717 (DFEGVDMRVG…EDAPLGTRIK (99 aa)).

It belongs to the class-I aminoacyl-tRNA synthetase family. MetG type 1 subfamily. Homodimer. The cofactor is Zn(2+).

The protein localises to the cytoplasm. The catalysed reaction is tRNA(Met) + L-methionine + ATP = L-methionyl-tRNA(Met) + AMP + diphosphate. In terms of biological role, is required not only for elongation of protein synthesis but also for the initiation of all mRNA translation through initiator tRNA(fMet) aminoacylation. The polypeptide is Methionine--tRNA ligase (Haloarcula marismortui (strain ATCC 43049 / DSM 3752 / JCM 8966 / VKM B-1809) (Halobacterium marismortui)).